A 483-amino-acid polypeptide reads, in one-letter code: 6-phosphogluconate dehydrogenase, decarboxylating (483 aa).

NADP(+) contacts are provided by residues 10-15 and 33-35; these read GLAVMG and NRT. K38 carries the N6-acetyllysine modification. Residue S57 is modified to Phosphoserine. K59 carries the post-translational modification N6-acetyllysine. NADP(+) is bound by residues 75–77 and N103; that span reads VKA. Substrate-binding positions include N103 and 129–131; that span reads SGG. A Phosphoserine modification is found at S129. K184 serves as the catalytic Proton acceptor. 187 to 188 is a binding site for substrate; the sequence is HN. E191 serves as the catalytic Proton donor. Substrate-binding residues include Y192, K261, and R288. N6-acetyllysine is present on K309. R447 and H453 together coordinate substrate. Residue 478–481 coordinates NADP(+); that stretch reads SSSY.

It belongs to the 6-phosphogluconate dehydrogenase family. In terms of assembly, homodimer.

It localises to the cytoplasm. The enzyme catalyses 6-phospho-D-gluconate + NADP(+) = D-ribulose 5-phosphate + CO2 + NADPH. The protein operates within carbohydrate degradation; pentose phosphate pathway; D-ribulose 5-phosphate from D-glucose 6-phosphate (oxidative stage): step 3/3. Catalyzes the oxidative decarboxylation of 6-phosphogluconate to ribulose 5-phosphate and CO(2), with concomitant reduction of NADP to NADPH. The sequence is that of 6-phosphogluconate dehydrogenase, decarboxylating (PGD) from Homo sapiens (Human).